A 78-amino-acid chain; its full sequence is Alpha-neurotoxin homolog 1 (78 aa).

Residues 1 to 21 (MKTLLLTLVVVTIVCLDFGYT) form the signal peptide. 4 disulfide bridges follow: C24/C42, C37/C57, C59/C70, and C71/C76.

This sequence belongs to the three-finger toxin family. Short-chain subfamily. Orphan group XII sub-subfamily. Expressed by the venom gland.

It is found in the secreted. The chain is Alpha-neurotoxin homolog 1 from Micrurus corallinus (Brazilian coral snake).